A 586-amino-acid chain; its full sequence is Eukaryotic translation initiation factor 3 subunit D (586 aa).

A disordered region spans residues 107-154 (FGRGGGTVFRGRAQRGGAGQRGGRAGFQRVGAGRGQGGDRYYDNRGAR). Positions 108–131 (GRGGGTVFRGRAQRGGAGQRGGRA) are enriched in gly residues. Residues 301–315 (SLDLVTVNENAADAP) form an RNA gate region. Residues 566 to 577 (FEEDDEAAEEEQ) show a composition bias toward acidic residues. The segment at 566–586 (FEEDDEAAEEEQEAKGEVEEA) is disordered.

This sequence belongs to the eIF-3 subunit D family. As to quaternary structure, component of the eukaryotic translation initiation factor 3 (eIF-3) complex.

The protein localises to the cytoplasm. Functionally, mRNA cap-binding component of the eukaryotic translation initiation factor 3 (eIF-3) complex, which is involved in protein synthesis of a specialized repertoire of mRNAs and, together with other initiation factors, stimulates binding of mRNA and methionyl-tRNAi to the 40S ribosome. The eIF-3 complex specifically targets and initiates translation of a subset of mRNAs involved in cell proliferation. In the eIF-3 complex, eif3d specifically recognizes and binds the 7-methylguanosine cap of a subset of mRNAs. This chain is Eukaryotic translation initiation factor 3 subunit D, found in Emericella nidulans (strain FGSC A4 / ATCC 38163 / CBS 112.46 / NRRL 194 / M139) (Aspergillus nidulans).